A 323-amino-acid chain; its full sequence is Protease Do-like 5, chloroplastic (323 aa).

The transit peptide at 1–28 (MTMALASSKAFSSIFNTLSPINQSKFVL) directs the protein to the chloroplast. A thylakoid-targeting transit peptide spans 29-73 (ACSGSNHVDVIDRRRRIMIFGSSLALTSSLLGSNQQRLPMESAIA). Active-site charge relay system residues include histidine 147, aspartate 188, and serine 266. The tract at residues 186 to 283 (DNDLAVLKIE…YGHTIGVNTA (98 aa)) is serine protease.

This sequence belongs to the peptidase S1C family.

It localises to the plastid. It is found in the chloroplast thylakoid lumen. Functionally, probable serine protease. The protein is Protease Do-like 5, chloroplastic (DEGP5) of Arabidopsis thaliana (Mouse-ear cress).